The primary structure comprises 719 residues: Polyribonucleotide nucleotidyltransferase (719 aa).

Mg(2+) contacts are provided by Asp491 and Asp497. One can recognise a KH domain in the interval 558–617; it reads PRMLTIKINPEKIRDVIGKGGATIRALTEETGTQIDISDDGTIVIASVDETQAKEAQRRI. Residues 627-695 form the S1 motif domain; the sequence is GQIYDGSVLR…DKGRLRLSIK (69 aa).

The protein belongs to the polyribonucleotide nucleotidyltransferase family. Mg(2+) is required as a cofactor.

It localises to the cytoplasm. It catalyses the reaction RNA(n+1) + phosphate = RNA(n) + a ribonucleoside 5'-diphosphate. Involved in mRNA degradation. Catalyzes the phosphorolysis of single-stranded polyribonucleotides processively in the 3'- to 5'-direction. In Bordetella bronchiseptica (strain ATCC BAA-588 / NCTC 13252 / RB50) (Alcaligenes bronchisepticus), this protein is Polyribonucleotide nucleotidyltransferase.